We begin with the raw amino-acid sequence, 117 residues long: Small ribosomal subunit protein eS25 (117 aa).

Residues methionine 1–glycine 34 are disordered. Positions lysine 25–glycine 34 are enriched in basic residues.

It belongs to the eukaryotic ribosomal protein eS25 family.

This is Small ribosomal subunit protein eS25 (rps-25) from Caenorhabditis elegans.